A 293-amino-acid polypeptide reads, in one-letter code: Putative ABC transporter ATP-binding protein AF_0731 (293 aa).

One can recognise an ABC transporter domain in the interval 2–236; sequence IEAVDLHFCY…RKLGIRSFSL (235 aa). An ATP-binding site is contributed by 34–41; the sequence is GRNGAGKT.

This sequence belongs to the ABC transporter superfamily.

The protein localises to the cell membrane. Its function is as follows. Probably part of an ABC transporter complex. Responsible for energy coupling to the transport system. In Archaeoglobus fulgidus (strain ATCC 49558 / DSM 4304 / JCM 9628 / NBRC 100126 / VC-16), this protein is Putative ABC transporter ATP-binding protein AF_0731.